Reading from the N-terminus, the 2264-residue chain is RNA1 polyprotein (2264 aa).

Over 566 to 1156 (MCTALAAGIF…MGRTYLAENG (591 aa)) the chain is Cytoplasmic. Positions 750-916 (TEGPNELHKR…PGVLFDPDNP (167 aa)) constitute an SF3 helicase domain. Residue 780–787 (GQRHCGKS) coordinates ATP. Residues 1157–1177 (CGILMIAAALILILVSAWGFW) form a helical membrane-spanning segment. Over 1178–1203 (KLFIGLFSGSMSLGAAIVGMSAVDIK) the chain is Lumenal. The 210-residue stretch at 1227 to 1436 (AYAKSQAGDG…WADIMPPNTL (210 aa)) folds into the Peptidase C3 domain. Catalysis depends on for picornain 3C-like protease activity residues histidine 1270, glutamate 1308, and cysteine 1400. Positions 1713–1841 (NEAINCDYSG…SVSPSIASWF (129 aa)) constitute a RdRp catalytic domain.

It belongs to the nepoviruses RNA1 polyprotein family. Specific enzymatic cleavages by picornain 3C-like protease in vivo yield mature proteins. Picornain 3C-like protease is autocatalytically processed. In terms of processing, VPg is uridylylated by the polymerase and is covalently linked to the 5'-end of genomic RNA. This uridylylated form acts as a nucleotide-peptide primer for the polymerase.

The protein localises to the host endoplasmic reticulum lumen. Its subcellular location is the host endoplasmic reticulum membrane. The catalysed reaction is RNA(n) + a ribonucleoside 5'-triphosphate = RNA(n+1) + diphosphate. Functionally, picornain 3C-like protease is a thiol protease that cleaves the P1 and P2 polyproteins. This is RNA1 polyprotein from Beet ringspot virus (BRSV).